The sequence spans 497 residues: uncharacterized protein (497 aa).

Residues aspartate 12, threonine 13, and cysteine 52 each contribute to the Ca(2+) site. Cysteine 52 acts as the Nucleophile in catalysis. At cysteine 52 the chain carries 3-oxoalanine (Cys). Histidine 102 is a catalytic residue. The Ca(2+) site is built by aspartate 284 and histidine 285.

It belongs to the sulfatase family. Requires Ca(2+) as cofactor. In terms of processing, the conversion to 3-oxoalanine (also known as C-formylglycine, FGly), of a serine or cysteine residue in prokaryotes and of a cysteine residue in eukaryotes, is critical for catalytic activity.

This is an uncharacterized protein from Escherichia coli (strain K12).